The sequence spans 177 residues: Large ribosomal subunit protein uL10 (177 aa).

It belongs to the universal ribosomal protein uL10 family. Part of the ribosomal stalk of the 50S ribosomal subunit. The N-terminus interacts with L11 and the large rRNA to form the base of the stalk. The C-terminus forms an elongated spine to which L12 dimers bind in a sequential fashion forming a multimeric L10(L12)X complex.

Forms part of the ribosomal stalk, playing a central role in the interaction of the ribosome with GTP-bound translation factors. The chain is Large ribosomal subunit protein uL10 from Thermoanaerobacter pseudethanolicus (strain ATCC 33223 / 39E) (Clostridium thermohydrosulfuricum).